Consider the following 475-residue polypeptide: Glycogen synthase (475 aa).

Lysine 15 serves as a coordination point for ADP-alpha-D-glucose.

It belongs to the glycosyltransferase 1 family. Bacterial/plant glycogen synthase subfamily.

It carries out the reaction [(1-&gt;4)-alpha-D-glucosyl](n) + ADP-alpha-D-glucose = [(1-&gt;4)-alpha-D-glucosyl](n+1) + ADP + H(+). Its pathway is glycan biosynthesis; glycogen biosynthesis. Functionally, synthesizes alpha-1,4-glucan chains using ADP-glucose. This chain is Glycogen synthase, found in Chlamydia abortus (strain DSM 27085 / S26/3) (Chlamydophila abortus).